Reading from the N-terminus, the 642-residue chain is Threonine--tRNA ligase (642 aa).

The TGS domain maps to 1–63 (MSTVTVTLPD…TADVELEIVT (63 aa)). Positions 242–533 (DHRKIGQEMD…LTEHYNGKFP (292 aa)) are catalytic. Zn(2+)-binding residues include Cys334, His385, and His510.

The protein belongs to the class-II aminoacyl-tRNA synthetase family. As to quaternary structure, homodimer. The cofactor is Zn(2+).

The protein resides in the cytoplasm. It catalyses the reaction tRNA(Thr) + L-threonine + ATP = L-threonyl-tRNA(Thr) + AMP + diphosphate + H(+). Functionally, catalyzes the attachment of threonine to tRNA(Thr) in a two-step reaction: L-threonine is first activated by ATP to form Thr-AMP and then transferred to the acceptor end of tRNA(Thr). The chain is Threonine--tRNA ligase from Haloarcula marismortui (strain ATCC 43049 / DSM 3752 / JCM 8966 / VKM B-1809) (Halobacterium marismortui).